A 334-amino-acid chain; its full sequence is Holliday junction branch migration complex subunit RuvB (334 aa).

Residues 4-184 (ADRLVSAGVI…FGIVQRLEFY (181 aa)) form a large ATPase domain (RuvB-L) region. ATP is bound by residues Ile23, Arg24, Gly65, Lys68, Thr69, Thr70, 131-133 (EDY), Arg174, Tyr184, and Arg221. Mg(2+) is bound at residue Thr69. Residues 185-255 (RVEDLQHIVG…VASRALDMLS (71 aa)) are small ATPAse domain (RuvB-S). Positions 258–334 (SEGFDYMDRK…YKHFGITREG (77 aa)) are head domain (RuvB-H). Arg294, Arg313, and Arg318 together coordinate DNA.

Belongs to the RuvB family. In terms of assembly, homohexamer. Forms an RuvA(8)-RuvB(12)-Holliday junction (HJ) complex. HJ DNA is sandwiched between 2 RuvA tetramers; dsDNA enters through RuvA and exits via RuvB. An RuvB hexamer assembles on each DNA strand where it exits the tetramer. Each RuvB hexamer is contacted by two RuvA subunits (via domain III) on 2 adjacent RuvB subunits; this complex drives branch migration. In the full resolvosome a probable DNA-RuvA(4)-RuvB(12)-RuvC(2) complex forms which resolves the HJ.

It is found in the cytoplasm. The catalysed reaction is ATP + H2O = ADP + phosphate + H(+). In terms of biological role, the RuvA-RuvB-RuvC complex processes Holliday junction (HJ) DNA during genetic recombination and DNA repair, while the RuvA-RuvB complex plays an important role in the rescue of blocked DNA replication forks via replication fork reversal (RFR). RuvA specifically binds to HJ cruciform DNA, conferring on it an open structure. The RuvB hexamer acts as an ATP-dependent pump, pulling dsDNA into and through the RuvAB complex. RuvB forms 2 homohexamers on either side of HJ DNA bound by 1 or 2 RuvA tetramers; 4 subunits per hexamer contact DNA at a time. Coordinated motions by a converter formed by DNA-disengaged RuvB subunits stimulates ATP hydrolysis and nucleotide exchange. Immobilization of the converter enables RuvB to convert the ATP-contained energy into a lever motion, pulling 2 nucleotides of DNA out of the RuvA tetramer per ATP hydrolyzed, thus driving DNA branch migration. The RuvB motors rotate together with the DNA substrate, which together with the progressing nucleotide cycle form the mechanistic basis for DNA recombination by continuous HJ branch migration. Branch migration allows RuvC to scan DNA until it finds its consensus sequence, where it cleaves and resolves cruciform DNA. The protein is Holliday junction branch migration complex subunit RuvB of Erwinia tasmaniensis (strain DSM 17950 / CFBP 7177 / CIP 109463 / NCPPB 4357 / Et1/99).